We begin with the raw amino-acid sequence, 141 residues long: ATP synthase epsilon chain (141 aa).

This sequence belongs to the ATPase epsilon chain family. As to quaternary structure, F-type ATPases have 2 components, CF(1) - the catalytic core - and CF(0) - the membrane proton channel. CF(1) has five subunits: alpha(3), beta(3), gamma(1), delta(1), epsilon(1). CF(0) has three main subunits: a, b and c.

It is found in the cell inner membrane. Functionally, produces ATP from ADP in the presence of a proton gradient across the membrane. The sequence is that of ATP synthase epsilon chain from Burkholderia cenocepacia (strain ATCC BAA-245 / DSM 16553 / LMG 16656 / NCTC 13227 / J2315 / CF5610) (Burkholderia cepacia (strain J2315)).